A 557-amino-acid chain; its full sequence is Formate--tetrahydrofolate ligase (557 aa).

67 to 74 (TPAGEGKS) provides a ligand contact to ATP.

The protein belongs to the formate--tetrahydrofolate ligase family.

It carries out the reaction (6S)-5,6,7,8-tetrahydrofolate + formate + ATP = (6R)-10-formyltetrahydrofolate + ADP + phosphate. It functions in the pathway one-carbon metabolism; tetrahydrofolate interconversion. The polypeptide is Formate--tetrahydrofolate ligase (Lacticaseibacillus paracasei (strain ATCC 334 / BCRC 17002 / CCUG 31169 / CIP 107868 / KCTC 3260 / NRRL B-441) (Lactobacillus paracasei)).